Consider the following 266-residue polypeptide: 3-methyl-2-oxobutanoate hydroxymethyltransferase (266 aa).

Residues aspartate 45 and aspartate 84 each contribute to the Mg(2+) site. 3-methyl-2-oxobutanoate-binding positions include 45-46 (DS), aspartate 84, and lysine 112. A Mg(2+)-binding site is contributed by glutamate 114. Glutamate 181 acts as the Proton acceptor in catalysis.

Belongs to the PanB family. Homodecamer; pentamer of dimers. Requires Mg(2+) as cofactor.

Its subcellular location is the cytoplasm. It catalyses the reaction 3-methyl-2-oxobutanoate + (6R)-5,10-methylene-5,6,7,8-tetrahydrofolate + H2O = 2-dehydropantoate + (6S)-5,6,7,8-tetrahydrofolate. The protein operates within cofactor biosynthesis; (R)-pantothenate biosynthesis; (R)-pantoate from 3-methyl-2-oxobutanoate: step 1/2. Functionally, catalyzes the reversible reaction in which hydroxymethyl group from 5,10-methylenetetrahydrofolate is transferred onto alpha-ketoisovalerate to form ketopantoate. The chain is 3-methyl-2-oxobutanoate hydroxymethyltransferase from Stutzerimonas stutzeri (strain A1501) (Pseudomonas stutzeri).